Here is a 189-residue protein sequence, read N- to C-terminus: Ras-like protein 1 (189 aa).

10 to 17 (GAGGVGKS) contacts GTP. Positions 32 to 40 (YDPTIEDSY) match the Effector region motif. GTP contacts are provided by residues 57-61 (DTAGQ) and 116-119 (NKCD). Cysteine 186 is subject to Cysteine methyl ester. Cysteine 186 carries the S-geranylgeranyl cysteine lipid modification. The propeptide at 187-189 (KML) is removed in mature form.

The protein belongs to the small GTPase superfamily. Ras family.

It localises to the cell membrane. The catalysed reaction is GTP + H2O = GDP + phosphate + H(+). Its activity is regulated as follows. Alternates between an inactive form bound to GDP and an active form bound to GTP. Activated by a guanine nucleotide-exchange factor (GEF) and inactivated by a GTPase-activating protein (GAP). Ras proteins bind GDP/GTP and possess intrinsic GTPase activity. Plays a role in eye development by regulating cell growth, survival of postmitotic ommatidial cells and differentiation of photoreceptor cells. During larval development, mediates Ptth/tor signaling leading to the production of ecdysone, a hormone required for the initiation of metamorphosis. This Drosophila grimshawi (Hawaiian fruit fly) protein is Ras-like protein 1.